Consider the following 729-residue polypeptide: Fatty acid oxidation complex subunit alpha (729 aa).

The enoyl-CoA hydratase/isomerase stretch occupies residues 1-189 (MLYQSETLQL…KIGLVDAVVD (189 aa)). Substrate is bound at residue Asp296. Residues 311–729 (AAPKLAAVLG…LLDVSTNQPA (419 aa)) are 3-hydroxyacyl-CoA dehydrogenase. NAD(+)-binding positions include Met324, Asp343, 400–402 (VVE), Lys407, and Ser429. His450 functions as the For 3-hydroxyacyl-CoA dehydrogenase activity in the catalytic mechanism. Residue Asn453 coordinates NAD(+). Substrate is bound by residues Asn500 and Tyr660.

It in the N-terminal section; belongs to the enoyl-CoA hydratase/isomerase family. In the C-terminal section; belongs to the 3-hydroxyacyl-CoA dehydrogenase family. Heterotetramer of two alpha chains (FadB) and two beta chains (FadA).

The catalysed reaction is a (3S)-3-hydroxyacyl-CoA + NAD(+) = a 3-oxoacyl-CoA + NADH + H(+). The enzyme catalyses a (3S)-3-hydroxyacyl-CoA = a (2E)-enoyl-CoA + H2O. It catalyses the reaction a 4-saturated-(3S)-3-hydroxyacyl-CoA = a (3E)-enoyl-CoA + H2O. It carries out the reaction (3S)-3-hydroxybutanoyl-CoA = (3R)-3-hydroxybutanoyl-CoA. The catalysed reaction is a (3Z)-enoyl-CoA = a 4-saturated (2E)-enoyl-CoA. The enzyme catalyses a (3E)-enoyl-CoA = a 4-saturated (2E)-enoyl-CoA. Its pathway is lipid metabolism; fatty acid beta-oxidation. In terms of biological role, involved in the aerobic and anaerobic degradation of long-chain fatty acids via beta-oxidation cycle. Catalyzes the formation of 3-oxoacyl-CoA from enoyl-CoA via L-3-hydroxyacyl-CoA. It can also use D-3-hydroxyacyl-CoA and cis-3-enoyl-CoA as substrate. This is Fatty acid oxidation complex subunit alpha from Yersinia pseudotuberculosis serotype IB (strain PB1/+).